The primary structure comprises 819 residues: Pentatricopeptide repeat-containing protein At1g52620 (819 aa).

18 PPR repeats span residues asparagine 98–leucine 132, threonine 133–leucine 163, aspartate 169–valine 203, aspartate 204–proline 238, asparagine 239–proline 273, threonine 274–valine 308, serine 309–proline 343, aspartate 344–proline 378, asparagine 379–proline 413, aspartate 414–proline 448, aspartate 449–proline 483, aspartate 484–valine 518, aspartate 519–proline 553, aspartate 554–proline 588, asparagine 589–proline 623, asparagine 624–proline 659, histidine 709–proline 743, and aspartate 744–valine 779.

Belongs to the PPR family. P subfamily.

The protein is Pentatricopeptide repeat-containing protein At1g52620 of Arabidopsis thaliana (Mouse-ear cress).